A 582-amino-acid chain; its full sequence is Sorting nexin-4 (582 aa).

Residues 1–11 are compositionally biased toward polar residues; that stretch reads MSSDDQFTSIQ. The disordered stretch occupies residues 1–111; sequence MSSDDQFTSI…VNQEPSSDSQ (111 aa). Composition is skewed to basic and acidic residues over residues 12 to 27 and 35 to 54; these read WDRDELGPNKETKVNK and DEHHNNDNEDKDNDTTKSNE. Acidic residues predominate over residues 57-70; that stretch reads NIQEDDETKDDNEP. The 134-residue stretch at 116-249 folds into the PX domain; it reads EINVVVTSPL…HLFVSDSADW (134 aa). Positions 171, 197, and 216 each coordinate a 1,2-diacyl-sn-glycero-3-phospho-(1D-myo-inositol-3-phosphate). 2 coiled-coil regions span residues 300–329 and 494–529; these read SKHKRETNKEILEISDKLKKLYENLIKLDK and SSVTESKVTKLQNRITELENEISVQSQLVLDLTNKI.

This sequence belongs to the sorting nexin family.

It localises to the cytoplasm. The protein localises to the cytosol. Its subcellular location is the preautophagosomal structure membrane. The protein resides in the endosome membrane. In terms of biological role, sorting nexin, involved in the separation or division of vacuoles throughout the entire life cycle of the cells. Involved in retrieval of late-Golgi SNAREs from post-Golgi endosomes to the trans-Golgi network, for cytoplasm to vacuole transport (Cvt), and autophagy of large cargos including mitophagy, pexophagy and glycophagy. This chain is Sorting nexin-4 (SNX4), found in Debaryomyces hansenii (strain ATCC 36239 / CBS 767 / BCRC 21394 / JCM 1990 / NBRC 0083 / IGC 2968) (Yeast).